The chain runs to 102 residues: Large ribosomal subunit protein bL21 (102 aa).

The protein belongs to the bacterial ribosomal protein bL21 family. In terms of assembly, part of the 50S ribosomal subunit. Contacts protein L20.

This protein binds to 23S rRNA in the presence of protein L20. In Lawsonia intracellularis, this protein is Large ribosomal subunit protein bL21.